The following is a 265-amino-acid chain: Auxin-responsive protein IAA22 (265 aa).

2 disordered regions span residues L54–P88 and D172–M199. The span at L65–P88 shows a compositional bias: basic and acidic residues. The 104-residue stretch at T91–D194 folds into the PB1 domain.

It belongs to the Aux/IAA family. As to quaternary structure, homodimers and heterodimers. Highly expressed in flowers. Expressed in roots and seedlings.

The protein localises to the nucleus. Aux/IAA proteins are short-lived transcriptional factors that function as repressors of early auxin response genes at low auxin concentrations. The protein is Auxin-responsive protein IAA22 (IAA22) of Oryza sativa subsp. japonica (Rice).